The chain runs to 364 residues: D-alanine--D-alanine ligase (364 aa).

The ATP-grasp domain maps to 134-347 (RRLACINGLK…YPDLLDELIN (214 aa)). Residue 167–222 (ASEFGWPLFVKPCSLGSSVGIHKANNMDELNAAVADALRYDEEILVEEFIVGREIE) coordinates ATP. Mg(2+) is bound by residues Asp300, Glu314, and Asn316.

It belongs to the D-alanine--D-alanine ligase family. Requires Mg(2+) as cofactor. The cofactor is Mn(2+).

The protein localises to the cytoplasm. It carries out the reaction 2 D-alanine + ATP = D-alanyl-D-alanine + ADP + phosphate + H(+). Its pathway is cell wall biogenesis; peptidoglycan biosynthesis. Its function is as follows. Cell wall formation. The polypeptide is D-alanine--D-alanine ligase (Legionella pneumophila (strain Paris)).